The sequence spans 361 residues: Histidine biosynthesis bifunctional protein HisB (361 aa).

The tract at residues 1–172 (MTQPTLFIDR…PKTTACKRPP (172 aa)) is histidinol-phosphatase. The active-site Nucleophile is the Asp9. Asp9 and Asp11 together coordinate Mg(2+). Catalysis depends on Asp11, which acts as the Proton donor. Residues Cys92, His94, Cys100, and Cys102 each contribute to the Zn(2+) site. Asp129 is a binding site for Mg(2+). The imidazoleglycerol-phosphate dehydratase stretch occupies residues 173 to 361 (RYAEVVRTTK…NELPSSKGVL (189 aa)).

It in the N-terminal section; belongs to the histidinol-phosphatase family. The protein in the C-terminal section; belongs to the imidazoleglycerol-phosphate dehydratase family. Mg(2+) is required as a cofactor. Requires Zn(2+) as cofactor.

The protein resides in the cytoplasm. The catalysed reaction is D-erythro-1-(imidazol-4-yl)glycerol 3-phosphate = 3-(imidazol-4-yl)-2-oxopropyl phosphate + H2O. It carries out the reaction L-histidinol phosphate + H2O = L-histidinol + phosphate. The protein operates within amino-acid biosynthesis; L-histidine biosynthesis; L-histidine from 5-phospho-alpha-D-ribose 1-diphosphate: step 6/9. It functions in the pathway amino-acid biosynthesis; L-histidine biosynthesis; L-histidine from 5-phospho-alpha-D-ribose 1-diphosphate: step 8/9. The sequence is that of Histidine biosynthesis bifunctional protein HisB from Actinobacillus pleuropneumoniae serotype 3 (strain JL03).